Reading from the N-terminus, the 1499-residue chain is B-cell CLL/lymphoma 9-like protein (1499 aa).

2 disordered regions span residues 1 to 238 (MRIL…PPSQ) and 271 to 500 (VPRA…MGQQ). Positions 20-37 (GSPPLSPRGHCPPAPAKP) are enriched in pro residues. Ser21 and Ser25 each carry phosphoserine. Lys36 is modified (N6-acetyllysine). Polar residues-rich tracts occupy residues 45–70 (TNHGKTGNGGAQSQHQNVNQGPTCNV) and 85–96 (NQISPSNSSLKN). Ser88 bears the Phosphoserine mark. 2 positions are modified to N6-acetyllysine: Lys108 and Lys110. Composition is skewed to basic and acidic residues over residues 114–126 (DRSVSVDSGEQRE) and 134–153 (SEAKEVAPRSKRRCVLERKQ). Ser116 and Ser118 each carry phosphoserine. Lys137 is subject to N6-acetyllysine. Over residues 193-205 (PGQTTQLPLSESS) the composition is skewed to polar residues. Positions 222–232 (PGGGGGGGGVP) are enriched in gly residues. Composition is skewed to pro residues over residues 281–291 (KVPPTPEPLPL) and 301–325 (SQPPPLPPPPPPAPGSAPPALPPEG). The segment at 304–533 (PPLPPPPPPA…QEEYYEEKRR (230 aa)) is necessary for interaction with CTNNB1. 2 stretches are compositionally biased toward low complexity: residues 351–363 (THPNTPTATTANN) and 370–387 (DPSSAPGPALLGEAAAPG). Residues 399-421 (LSKEQLEHRERSLQTLRDIERLL) are compositionally biased toward basic and acidic residues. Ser424 carries the post-translational modification Phosphoserine. Pro residues predominate over residues 445-458 (AQAPPPPQQPPTAP). A Phosphothreonine modification is found at Thr514. Arg680 carries the post-translational modification Asymmetric dimethylarginine. Phosphoserine occurs at positions 750, 813, 915, 926, 938, 942, 947, 975, 987, 991, 997, 1004, 1010, and 1017. 2 disordered regions span residues 888–1084 (SHMP…QNPL) and 1116–1201 (ELLP…PQNS). Polar residues predominate over residues 935-960 (PTLSQVHSPLVTSPSANLKSPQTPSQ). Polar residues predominate over residues 978–996 (VLGSSLSVRSPTGSPSRLK). Polar residues-rich tracts occupy residues 1019–1041 (GVSQNKQPPLNMNSSTTLSNMEQ) and 1069–1084 (LPFTSSPDPTPSQNPL). Composition is skewed to pro residues over residues 1122 to 1132 (PLLPPPPPPQG) and 1168 to 1179 (HEPPPAMLPSPT). A Glycyl lysine isopeptide (Lys-Gly) (interchain with G-Cter in SUMO2) cross-link involves residue Lys1344.

This sequence belongs to the BCL9 family. Found in a complex with CDC73; CTNNB1 and PYGO1. Interacts with CTNNB1. Expressed in breast, ductal and invasive ductal carcinomas of the breast, sporadic colorectal adenomas and carcinomas (at protein level). Expressed in fetal brain. Expressed in lung, amygdala, eye, prostate, pancreatic and prostate cancers, head and neck tumors and embryonal tumor.

Its subcellular location is the nucleus. Its function is as follows. Transcriptional regulator that acts as an activator. Promotes beta-catenin transcriptional activity. Plays a role in tumorigenesis. Enhances the neoplastic transforming activity of CTNNB1. This is B-cell CLL/lymphoma 9-like protein (BCL9L) from Homo sapiens (Human).